Reading from the N-terminus, the 386-residue chain is Protein phosphatase methylesterase 1 (386 aa).

The segment at 1–38 is disordered; sequence MSALEKSMHLGRLPSRPPLPGSGGSQSGAKMRMGPGRK. Residue Ser-15 is modified to Phosphoserine. Arg-16 bears the Asymmetric dimethylarginine; alternate mark. Omega-N-methylarginine; alternate is present on Arg-16. Ser-156 is a catalytic residue. A compositionally biased stretch (acidic residues) spans 255 to 265; the sequence is IEEEEEDEEGS. Residues 255–280 form a disordered region; the sequence is IEEEEEDEEGSESVNKRKKEDDMETK. Basic and acidic residues predominate over residues 268 to 280; the sequence is VNKRKKEDDMETK. Residue His-349 is part of the active site.

The protein belongs to the AB hydrolase superfamily. In terms of assembly, binds PPP2CA and PPP2CB. Phosphorylated by SIK1 following increases in intracellular sodium, leading to dissociation from the protein phosphatase 2A (PP2A) complex and subsequent dephosphorylation of sodium/potassium-transporting ATPase ATP1A1.

The catalysed reaction is [phosphatase 2A protein]-C-terminal L-leucine methyl ester + H2O = [phosphatase 2A protein]-C-terminal L-leucine + methanol + H(+). In terms of biological role, demethylates proteins that have been reversibly carboxymethylated. Demethylates PPP2CB (in vitro) and PPP2CA. Binding to PPP2CA displaces the manganese ion and inactivates the enzyme. The sequence is that of Protein phosphatase methylesterase 1 (Ppme1) from Rattus norvegicus (Rat).